The chain runs to 1006 residues: Probable protein phosphatase DDB_G0279461 (1006 aa).

The span at 1-12 shows a compositional bias: polar residues; that stretch reads MMVPSLSTSISS. Disordered regions lie at residues 1 to 119, 146 to 188, 214 to 269, 312 to 387, 459 to 513, 525 to 563, and 604 to 642; these read MMVP…NNKE, SHAS…RSNS, SSED…NGIR, DAES…PPNQ, NINN…NNIQ, DYNI…NSKF, and GSIP…TSAS. Positions 59 to 69 are enriched in acidic residues; the sequence is NEEEGTADNEL. Residues 65–122 adopt a coiled-coil conformation; sequence ADNELESLMSLVNDNNNNNNNTSGIDDDNNNDIDDNNNNNNNNNNNNNNNNNNKEGLN. Residues 77-88 show a composition bias toward low complexity; that stretch reads NDNNNNNNNTSG. Over residues 89–99 the composition is skewed to acidic residues; it reads IDDDNNNDIDD. The span at 100–117 shows a compositional bias: low complexity; the sequence is NNNNNNNNNNNNNNNNNN. Residues 146 to 158 are compositionally biased toward polar residues; the sequence is SHASVSNQSSNGS. 3 stretches are compositionally biased toward low complexity: residues 220-234, 244-254, and 316-387; these read SCHN…NKNN, NINNNNNNNCN, and NYNN…PPNQ. A coiled-coil region spans residues 450-516; sequence KIDNLNKNIN…NNNNNIQDIQ (67 aa). The segment covering 466-481 has biased composition (polar residues); it reads TDSQQPLPSIDVNFSH. Low complexity predominate over residues 482 to 511; that stretch reads NNNNNNNDNDNNNNNNNNNNNNNNNNNNNN. Over residues 525-538 the composition is skewed to polar residues; sequence DYNIQEGNDINNDN. Composition is skewed to low complexity over residues 552–561 and 613–639; these read SSNNNNNNNS and NNNN…TTTT. In terms of domain architecture, PPM-type phosphatase spans 744 to 1005; sequence DINKRGLKRA…DNISIIVVTL (262 aa). Residues Asp784, Gly785, Asp956, and Asp996 each contribute to the Mn(2+) site.

It in the C-terminal section; belongs to the PP2C family. Requires Mg(2+) as cofactor. The cofactor is Mn(2+).

The catalysed reaction is O-phospho-L-seryl-[protein] + H2O = L-seryl-[protein] + phosphate. It carries out the reaction O-phospho-L-threonyl-[protein] + H2O = L-threonyl-[protein] + phosphate. This is Probable protein phosphatase DDB_G0279461 from Dictyostelium discoideum (Social amoeba).